Reading from the N-terminus, the 213-residue chain is Orotate phosphoribosyltransferase (213 aa).

A 5-phospho-alpha-D-ribose 1-diphosphate-binding site is contributed by K26. Residue 34–35 (FF) participates in orotate binding. 5-phospho-alpha-D-ribose 1-diphosphate contacts are provided by residues 72 to 73 (YK), R99, K100, K103, H105, and 124 to 132 (DDVITAGTA). Orotate is bound by residues T128 and R156.

This sequence belongs to the purine/pyrimidine phosphoribosyltransferase family. PyrE subfamily. In terms of assembly, homodimer. The cofactor is Mg(2+).

It catalyses the reaction orotidine 5'-phosphate + diphosphate = orotate + 5-phospho-alpha-D-ribose 1-diphosphate. Its pathway is pyrimidine metabolism; UMP biosynthesis via de novo pathway; UMP from orotate: step 1/2. Catalyzes the transfer of a ribosyl phosphate group from 5-phosphoribose 1-diphosphate to orotate, leading to the formation of orotidine monophosphate (OMP). The sequence is that of Orotate phosphoribosyltransferase from Photorhabdus laumondii subsp. laumondii (strain DSM 15139 / CIP 105565 / TT01) (Photorhabdus luminescens subsp. laumondii).